A 426-amino-acid chain; its full sequence is Lipid droplet localized protein (426 aa).

A helical transmembrane segment spans residues 278–298 (FYGYLIGLWIMFLSIFVKYPF).

It belongs to the saccharopine dehydrogenase family.

It localises to the membrane. The protein localises to the lipid droplet. This Caenorhabditis elegans protein is Lipid droplet localized protein.